The following is a 215-amino-acid chain: Pyridoxine/pyridoxamine 5'-phosphate oxidase (215 aa).

Residues 11–14 (RRDY) and Lys69 contribute to the substrate site. Residues 64-69 (RVVLLK), 79-80 (YT), Lys86, and Gln108 each bind FMN. 3 residues coordinate substrate: Tyr126, Arg130, and Ser134. FMN-binding positions include 143–144 (QS) and Trp188. 194-196 (RLH) serves as a coordination point for substrate. Arg198 is an FMN binding site.

Belongs to the pyridoxamine 5'-phosphate oxidase family. As to quaternary structure, homodimer. Requires FMN as cofactor.

It carries out the reaction pyridoxamine 5'-phosphate + O2 + H2O = pyridoxal 5'-phosphate + H2O2 + NH4(+). It catalyses the reaction pyridoxine 5'-phosphate + O2 = pyridoxal 5'-phosphate + H2O2. It participates in cofactor metabolism; pyridoxal 5'-phosphate salvage; pyridoxal 5'-phosphate from pyridoxamine 5'-phosphate: step 1/1. It functions in the pathway cofactor metabolism; pyridoxal 5'-phosphate salvage; pyridoxal 5'-phosphate from pyridoxine 5'-phosphate: step 1/1. In terms of biological role, catalyzes the oxidation of either pyridoxine 5'-phosphate (PNP) or pyridoxamine 5'-phosphate (PMP) into pyridoxal 5'-phosphate (PLP). The chain is Pyridoxine/pyridoxamine 5'-phosphate oxidase from Legionella pneumophila (strain Lens).